A 719-amino-acid chain; its full sequence is UvrABC system protein B (719 aa).

A Helicase ATP-binding domain is found at 49–435 (RRINAGERDV…TGGEFVEQVI (387 aa)). 62-69 (GATGTGKS) is a binding site for ATP. Residues 115–138 (YYDYYQPEAYIAQTDTYIEKDSSI) carry the Beta-hairpin motif. The Helicase C-terminal domain occupies 453–606 (QIDDLIGEIR…QIAYNEANGI (154 aa)). The interval 635-654 (GGSGRNASRGRRAQGEPGRA) is disordered. The region spanning 674–709 (ADLIKDLTAQMMAAARDLQFELAARFRDEIADLKRE) is the UVR domain.

It belongs to the UvrB family. In terms of assembly, forms a heterotetramer with UvrA during the search for lesions. Interacts with UvrC in an incision complex.

The protein localises to the cytoplasm. Its function is as follows. The UvrABC repair system catalyzes the recognition and processing of DNA lesions. A damage recognition complex composed of 2 UvrA and 2 UvrB subunits scans DNA for abnormalities. Upon binding of the UvrA(2)B(2) complex to a putative damaged site, the DNA wraps around one UvrB monomer. DNA wrap is dependent on ATP binding by UvrB and probably causes local melting of the DNA helix, facilitating insertion of UvrB beta-hairpin between the DNA strands. Then UvrB probes one DNA strand for the presence of a lesion. If a lesion is found the UvrA subunits dissociate and the UvrB-DNA preincision complex is formed. This complex is subsequently bound by UvrC and the second UvrB is released. If no lesion is found, the DNA wraps around the other UvrB subunit that will check the other stand for damage. In Mycobacterium tuberculosis (strain CDC 1551 / Oshkosh), this protein is UvrABC system protein B.